A 187-amino-acid polypeptide reads, in one-letter code: Elongation factor P (187 aa).

The protein belongs to the elongation factor P family.

Its subcellular location is the cytoplasm. The protein operates within protein biosynthesis; polypeptide chain elongation. Functionally, involved in peptide bond synthesis. Stimulates efficient translation and peptide-bond synthesis on native or reconstituted 70S ribosomes in vitro. Probably functions indirectly by altering the affinity of the ribosome for aminoacyl-tRNA, thus increasing their reactivity as acceptors for peptidyl transferase. The polypeptide is Elongation factor P (Bifidobacterium animalis subsp. lactis (strain AD011)).